The following is a 964-amino-acid chain: Pumilio homolog 3 (964 aa).

The disordered stretch occupies residues 1-22 (MMIPELGRRPMHRGNEDSSFGD). Position 192 is a phosphoserine (serine 192). 3 disordered regions span residues 204-235 (PVVQQPSRPASRNTFDENVDSNNNLSPSASQG), 256-300 (GTPD…TSGL), and 343-388 (DGHN…VANP). 2 stretches are compositionally biased toward polar residues: residues 207-216 (QQPSRPASRN) and 223-234 (DSNNNLSPSASQ). A Phosphothreonine modification is found at threonine 257. Polar residues-rich tracts occupy residues 287–300 (TSNQSPFNGVTSGL) and 356–384 (RSDQARGTASCRNSQMRGSQGSAYNSGSG). Residues 606–946 (FGSSMLEEFK…HIVARVEKLV (341 aa)) enclose the PUM-HD domain. Pumilio repeat units lie at residues 626 to 661 (EIAGHVVEFSSDQYGSRFIQQKLETATTDEKNMVYE), 662 to 697 (EIMPKALALMTDVFGNYVIQKFFEHGLPPQRRELGE), 698 to 733 (KLIDNVLPLSLQMYGCRVIQKAIEVVDLDQKIQMVK), 734 to 769 (ELDGHVMRCVRDQNGNHVVQKCIECVPEENIEFIIS), 770 to 806 (TFFGHVVTLSTHPYGCRVIQRVLEHCHNPDTQSKVME), 807 to 842 (EILSTVSMLTQDQYGNYVVQHVLEHGKPDERTVIIK), 843 to 878 (ELAGKIVQMSQQKFASNVVEKCLTFGGPEERELLVN), and 879 to 920 (EMLG…LILT).

Its subcellular location is the cytoplasm. Its function is as follows. Sequence-specific RNA-binding protein that regulates translation and mRNA stability by binding the 3'-UTR of target mRNAs. Binds the APUM-binding elements (APBEs) in the 3'-UTR mRNA sequence of CLV1, PNH, WUS and FAS2. The sequence is that of Pumilio homolog 3 (APUM3) from Arabidopsis thaliana (Mouse-ear cress).